A 1041-amino-acid chain; its full sequence is Isoleucine--tRNA ligase (1041 aa).

A 'HIGH' region motif is present at residues 53 to 63; that stretch reads PFANGLPHYGH. The short motif at 619-623 is the 'KMSKS' region element; it reads KMSKS. Lys-622 serves as a coordination point for ATP.

The protein belongs to the class-I aminoacyl-tRNA synthetase family. IleS type 2 subfamily. Monomer. Requires Zn(2+) as cofactor.

The protein localises to the cytoplasm. It catalyses the reaction tRNA(Ile) + L-isoleucine + ATP = L-isoleucyl-tRNA(Ile) + AMP + diphosphate. Its function is as follows. Catalyzes the attachment of isoleucine to tRNA(Ile). As IleRS can inadvertently accommodate and process structurally similar amino acids such as valine, to avoid such errors it has two additional distinct tRNA(Ile)-dependent editing activities. One activity is designated as 'pretransfer' editing and involves the hydrolysis of activated Val-AMP. The other activity is designated 'posttransfer' editing and involves deacylation of mischarged Val-tRNA(Ile). This chain is Isoleucine--tRNA ligase, found in Mycobacterium bovis (strain ATCC BAA-935 / AF2122/97).